The sequence spans 208 residues: Urease accessory protein UreG 2 (208 aa).

16–23 (GPVGSGKT) serves as a coordination point for GTP.

The protein belongs to the SIMIBI class G3E GTPase family. UreG subfamily. As to quaternary structure, homodimer. UreD, UreF and UreG form a complex that acts as a GTP-hydrolysis-dependent molecular chaperone, activating the urease apoprotein by helping to assemble the nickel containing metallocenter of UreC. The UreE protein probably delivers the nickel.

The protein resides in the cytoplasm. In terms of biological role, facilitates the functional incorporation of the urease nickel metallocenter. This process requires GTP hydrolysis, probably effectuated by UreG. This Methylobacterium radiotolerans (strain ATCC 27329 / DSM 1819 / JCM 2831 / NBRC 15690 / NCIMB 10815 / 0-1) protein is Urease accessory protein UreG 2.